The primary structure comprises 334 residues: E3 ubiquitin-protein ligase CIP8 (334 aa).

Residues 111–158 (LNSRNEIDDDEDEDEDDGDEEEEDEEENLTVNDEEDEEDDLRRRNRFP) form a disordered region. Residues 117 to 149 (IDDDEDEDEDDGDEEEEDEEENLTVNDEEDEED) show a composition bias toward acidic residues. The RING-type; atypical zinc finger occupies 257–298 (CAVCKDGMVMGETGKKLPCGHCYHGDCIVPWLGTRNSCPVCR). Residues 307–334 (EYEEERKKRTSTVSDSAAASSSSSTSRY) are disordered. The span at 317 to 334 (STVSDSAAASSSSSTSRY) shows a compositional bias: low complexity.

In terms of assembly, interacts with the RING finger of COP1. Interacts with UBC8 through its N-terminal region. As to expression, expressed in both light- and dark-grown seedlings.

Its subcellular location is the cytoplasm. It carries out the reaction S-ubiquitinyl-[E2 ubiquitin-conjugating enzyme]-L-cysteine + [acceptor protein]-L-lysine = [E2 ubiquitin-conjugating enzyme]-L-cysteine + N(6)-ubiquitinyl-[acceptor protein]-L-lysine.. The protein operates within protein modification; protein ubiquitination. Its function is as follows. E3 ubiquitin-protein ligase that mediates ubiquitination and subsequent proteasomal degradation of target proteins. Probably forms a minimal ubiquitin ligase complex in cooperation with the E2 enzyme UBC8. Its interaction with COP1 suggests that it may participate in proteasome-mediated degradation of HY5 in vivo. The polypeptide is E3 ubiquitin-protein ligase CIP8 (CIP8) (Arabidopsis thaliana (Mouse-ear cress)).